Reading from the N-terminus, the 401-residue chain is MATKRSVGTLKEADLKGKSVFVRVDLNVPLDDNSNITDDTRIRAAVPTIKYLMGNGSRVVLCSHLGRPKGVTPKYSLKPLVPRLSELLGVEVVMANDSIGEEVQKLVAGLPEGGVLLLENVRFYAEEEKNDPEFAKKLAALADVYVNDAFGTAHRAHASTEGVAKFLKPSVAGFLMQKELDYLVGAVANPKKPFAAIVGGSKVSTKIGVIESLLNTVDILLLGGGMIFTFYKAQGLSVGSSLVEEDKLDLAKSLMEKAKAKGVSLLLPTDVVIADKFAPDANSKIVPATAIPDGWMGLDIGPDSIKTFSEALDTTKTIIWNGPMGVFEFDKFAAGTEAVAKQLAELSGKGVTTIIGGGDSVAAVEKVGLADKMSHISTGGGASLELLEGKPLPGVLALDEA.

Positions 24, 25, 27, 41, 63, 64, 66, 67, 122, 154, and 155 each coordinate (2R)-3-phosphoglycerate. Gly-200 provides a ligand contact to ADP. Gly-200 is a CDP binding site. Positions 202 and 206 each coordinate AMP. Residue Lys-206 coordinates ATP. Residue Gly-224 coordinates ADP. Position 224 (Gly-224) interacts with CDP. The AMP site is built by Gly-225 and Gly-297. The ATP site is built by Gly-225, Gly-297, and Asn-321. CDP contacts are provided by Gly-322 and Phe-327. Phe-327 serves as a coordination point for ADP. Glu-328 lines the AMP pocket. Glu-328, Asp-359, and Ser-360 together coordinate ATP. Asp-359 serves as a coordination point for Mg(2+).

Belongs to the phosphoglycerate kinase family. In terms of assembly, monomer. Mg(2+) is required as a cofactor. As to expression, expressed in roots, leaves and inflorescence.

It is found in the cytoplasm. The enzyme catalyses (2R)-3-phosphoglycerate + ATP = (2R)-3-phospho-glyceroyl phosphate + ADP. Its pathway is carbohydrate degradation; glycolysis; pyruvate from D-glyceraldehyde 3-phosphate: step 2/5. This Arabidopsis thaliana (Mouse-ear cress) protein is Phosphoglycerate kinase 3, cytosolic.